The primary structure comprises 58 residues: Large ribosomal subunit protein uL30 (58 aa).

This sequence belongs to the universal ribosomal protein uL30 family. Part of the 50S ribosomal subunit.

In Novosphingobium aromaticivorans (strain ATCC 700278 / DSM 12444 / CCUG 56034 / CIP 105152 / NBRC 16084 / F199), this protein is Large ribosomal subunit protein uL30.